Consider the following 83-residue polypeptide: Probable insulin-like peptide alpha-type 2 (83 aa).

A signal peptide spans 1–21 (MHTTTILICFFIFLVQVSTMD). 3 disulfides stabilise this stretch: cysteine 32–cysteine 66, cysteine 44–cysteine 79, and cysteine 54–cysteine 80.

This sequence belongs to the insulin family.

The protein resides in the secreted. This is Probable insulin-like peptide alpha-type 2 (ins-22) from Caenorhabditis elegans.